The sequence spans 196 residues: Protein/nucleic acid deglycase 3 (196 aa).

Cys-106 acts as the Nucleophile in catalysis. Cys-106 carries the post-translational modification Cysteine sulfinic acid (-SO2H); alternate.

It belongs to the peptidase C56 family. Homodimer. In terms of processing, cys-106 is easily oxidized to sulfinic acid.

It catalyses the reaction N(omega)-(1-hydroxy-2-oxopropyl)-L-arginyl-[protein] + H2O = lactate + L-arginyl-[protein] + H(+). It carries out the reaction N(6)-(1-hydroxy-2-oxopropyl)-L-lysyl-[protein] + H2O = lactate + L-lysyl-[protein] + H(+). The enzyme catalyses S-(1-hydroxy-2-oxopropyl)-L-cysteinyl-[protein] + H2O = lactate + L-cysteinyl-[protein] + H(+). The catalysed reaction is N(omega)-(1-hydroxy-2-oxoethyl)-L-arginyl-[protein] + H2O = L-arginyl-[protein] + glycolate + H(+). It catalyses the reaction N(6)-(1-hydroxy-2-oxoethyl)-L-lysyl-[protein] + H2O = glycolate + L-lysyl-[protein] + H(+). It carries out the reaction S-(1-hydroxy-2-oxoethyl)-L-cysteinyl-[protein] + H2O = glycolate + L-cysteinyl-[protein] + H(+). The enzyme catalyses N(2)-(1-hydroxy-2-oxopropyl)-dGTP + H2O = lactate + dGTP + H(+). The catalysed reaction is N(2)-(1-hydroxy-2-oxopropyl)-GTP + H2O = lactate + GTP + H(+). It catalyses the reaction N(2)-(1-hydroxy-2-oxopropyl)-GDP + H2O = lactate + GDP + H(+). It carries out the reaction N(2)-(1-hydroxy-2-oxopropyl)-GMP + H2O = lactate + GMP + H(+). The enzyme catalyses N(2)-(1-hydroxy-2-oxoethyl)-dGTP + H2O = dGTP + glycolate + H(+). The catalysed reaction is N(2)-(1-hydroxy-2-oxoethyl)-GTP + H2O = glycolate + GTP + H(+). It catalyses the reaction N(2)-(1-hydroxy-2-oxoethyl)-GDP + H2O = glycolate + GDP + H(+). It carries out the reaction N(2)-(1-hydroxy-2-oxoethyl)-GMP + H2O = glycolate + GMP + H(+). The enzyme catalyses an N(2)-(1-hydroxy-2-oxopropyl)-guanosine in RNA + H2O = a guanosine in RNA + lactate + H(+). The catalysed reaction is an N(2)-(1-hydroxy-2-oxopropyl)-2'-deoxyguanosine in DNA + H2O = a 2'-deoxyguanosine in DNA + lactate + H(+). It catalyses the reaction an N(2)-(1-hydroxy-2-oxoethyl)-guanosine in RNA + H2O = a guanosine in RNA + glycolate + H(+). It carries out the reaction an N(2)-(1-hydroxy-2-oxoethyl)-2'-deoxyguanosine in DNA + H2O = a 2'-deoxyguanosine in DNA + glycolate + H(+). Glyoxalase activity is inhibited by zinc ions. Active as a chaperone in both its reduced and oxidized states, and is more active in its oxidized form. Protein and nucleotide deglycase that catalyzes the deglycation of the Maillard adducts formed between amino groups of proteins or nucleotides and reactive carbonyl groups of glyoxals. Thus, functions as a protein deglycase that repairs methylglyoxal- and glyoxal-glycated proteins, and releases repaired proteins and lactate or glycolate, respectively. Deglycates cysteine, arginine and lysine residues in proteins, and thus reactivates these proteins by reversing glycation by glyoxals. Is able to repair glycated serum albumin, collagen, glyceraldehyde-3-phosphate dehydrogenase, and fructose biphosphate aldolase. Acts on early glycation intermediates (hemithioacetals and aminocarbinols), preventing the formation of Schiff bases and advanced glycation endproducts (AGE) that cause irreversible damage. Also functions as a nucleotide deglycase able to repair glycated guanine in the free nucleotide pool (GTP, GDP, GMP, dGTP) and in DNA and RNA. Is thus involved in a major nucleotide repair system named guanine glycation repair (GG repair), dedicated to reversing methylglyoxal and glyoxal damage via nucleotide sanitization and direct nucleic acid repair. However, is less efficient than Hsp31 and YhbO, suggesting that YajL might be preferentially dedicated to protein repair. Displays a covalent chaperone activity with sulfenylated thiol proteins by forming mixed disulfides with members of the thiol proteome, and preferentially with sulfenylated cellular proteins, upon oxidative stress; these mixed disulfides can be subsequently reduced by low-molecular-weight thiols to regenerate YajL and reduced proteins. Involved in biogenesis of ribosomal proteins, probably as a ribosomal protein-folding chaperone. Confers resistance to oxidative stress. Plays an important role in protection against electrophile/carbonyl stress. The chaperone activity reported for YajL is probably recruited to execute its deglycase activity, to interact with non-native glycated proteins and gain access to partially buried glycated sites. Also displays an apparent glyoxalase activity that in fact reflects its deglycase activity. This is Protein/nucleic acid deglycase 3 (yajL) from Escherichia coli (strain K12).